The following is a 195-amino-acid chain: Cytochrome c biogenesis ATP-binding export protein CcmA (195 aa).

The region spanning 1–195 (MLSLHQLQFN…IKSAQILQLV (195 aa)) is the ABC transporter domain. 33–40 (GANGSGKS) serves as a coordination point for ATP.

Belongs to the ABC transporter superfamily. CcmA exporter (TC 3.A.1.107) family. In terms of assembly, the complex is composed of two ATP-binding proteins (CcmA) and two transmembrane proteins (CcmB).

It localises to the cell inner membrane. The catalysed reaction is heme b(in) + ATP + H2O = heme b(out) + ADP + phosphate + H(+). Its function is as follows. Part of the ABC transporter complex CcmAB involved in the biogenesis of c-type cytochromes; once thought to export heme, this seems not to be the case, but its exact role is uncertain. Responsible for energy coupling to the transport system. This is Cytochrome c biogenesis ATP-binding export protein CcmA from Rickettsia felis (strain ATCC VR-1525 / URRWXCal2) (Rickettsia azadi).